Reading from the N-terminus, the 395-residue chain is Isoafricanol synthase (395 aa).

4 residues coordinate Mg(2+): D95, N246, S250, and E254. The segment covering 346–357 has biased composition (basic and acidic residues); it reads TEAVSGGRERPW. A disordered region spans residues 346–395; that stretch reads TEAVSGGRERPWARLTGAEDLIRAGRGAPPPPGSGPDTRQPMPSEPSQLA.

Belongs to the terpene synthase family. The cofactor is Mg(2+).

The catalysed reaction is (2E,6E)-farnesyl diphosphate + H2O = (+)-isoafricanol + diphosphate. Its function is as follows. Catalyzes the cyclization of farnesyl diphosphate (FPP) to isoafricanol. This Streptomyces malaysiensis protein is Isoafricanol synthase.